The chain runs to 507 residues: Histidine ammonia-lyase (507 aa).

The 5-imidazolinone (Ser-Gly) cross-link spans 143–145 (SSG). The residue at position 144 (serine 144) is a 2,3-didehydroalanine (Ser).

This sequence belongs to the PAL/histidase family. In terms of processing, contains an active site 4-methylidene-imidazol-5-one (MIO), which is formed autocatalytically by cyclization and dehydration of residues Ser-Ser-Gly.

The protein resides in the cytoplasm. The catalysed reaction is L-histidine = trans-urocanate + NH4(+). The protein operates within amino-acid degradation; L-histidine degradation into L-glutamate; N-formimidoyl-L-glutamate from L-histidine: step 1/3. The protein is Histidine ammonia-lyase of Alkaliphilus metalliredigens (strain QYMF).